Here is a 383-residue protein sequence, read N- to C-terminus: Na(+)/H(+) antiporter NhaA (383 aa).

11 helical membrane passes run 10-30 (LIGG…NNSP), 56-76 (LMHW…GLEI), 91-111 (IITP…IYLS), 121-141 (GWAI…ALLG), 150-170 (LLVI…IAIF), 174-194 (SLSL…IICN), 206-226 (VVLG…ATLA), 254-274 (PWII…ISFS), 289-308 (IIWG…LAVF), 327-347 (GISL…VLAF), and 355-375 (AIKI…YIVL).

This sequence belongs to the NhaA Na(+)/H(+) (TC 2.A.33) antiporter family.

The protein localises to the cell inner membrane. The catalysed reaction is Na(+)(in) + 2 H(+)(out) = Na(+)(out) + 2 H(+)(in). In terms of biological role, na(+)/H(+) antiporter that extrudes sodium in exchange for external protons. This is Na(+)/H(+) antiporter NhaA from Francisella tularensis subsp. tularensis (strain WY96-3418).